A 571-amino-acid polypeptide reads, in one-letter code: MQTNLSQLIKVARGETEADLVLLNARVINVFNAEIEQTNVAVFDGKIAGVGDYRHGKEVIDLKGAYLLPGLINGHTHVESSMLDIAQYARAVVSNGTLALITDLHEISNVCGKEGIDYVLDASADLPLSIFLQVPSCVPATHLETAGAEINSQDVADLLRLPNVTGLGEMMNFPGVLFGVPSVLDKIIAATGKVMDGHAPGLSGKDLNAYISAGIHSDHECIHLAEAKEKLARGMYIMIREGSSEKNLAELLPLVTDKTYKRCLFVVDDRSCADLKSDGDIDAVVRKAIRLGLDPVRAIQLASINTAEYFHLQGHGAIAPGYLANMIVCQNLEQLDIDMVFHKGKLVAEKGQALFKPQSRIPKSLLNSIHIKPFNTEDLVLKTIQPQIPVIEVIPGQIVTRRLDLKITAENGVIKANTELDLLKIVVLERHHQSGNIGHGLIRGFGLKKGAIASSVAHDSHNVVAVGTNDADLYTAIKELERINGGIALAVDGQVTASVSLPVAGLLSTKPLEEVVTELEEINNQVAKLGCKLSAPFATLSFMALPVIPELRLTDLGLVDVKTFKLIPQET.

This sequence belongs to the metallo-dependent hydrolases superfamily. Adenine deaminase family. The cofactor is Mn(2+).

The enzyme catalyses adenine + H2O + H(+) = hypoxanthine + NH4(+). This chain is Adenine deaminase, found in Dehalococcoides mccartyi (strain ATCC BAA-2100 / JCM 16839 / KCTC 5957 / BAV1).